Here is a 216-residue protein sequence, read N- to C-terminus: Octanoyltransferase (216 aa).

Residues 32–207 (SDSQDELWIV…TFSQIMGYQQ (176 aa)) form the BPL/LPL catalytic domain. Substrate contacts are provided by residues 71 to 78 (RGGQVTYH), 138 to 140 (SLG), and 151 to 153 (GLA). Cys169 acts as the Acyl-thioester intermediate in catalysis.

The protein belongs to the LipB family.

It localises to the cytoplasm. The enzyme catalyses octanoyl-[ACP] + L-lysyl-[protein] = N(6)-octanoyl-L-lysyl-[protein] + holo-[ACP] + H(+). The protein operates within protein modification; protein lipoylation via endogenous pathway; protein N(6)-(lipoyl)lysine from octanoyl-[acyl-carrier-protein]: step 1/2. In terms of biological role, catalyzes the transfer of endogenously produced octanoic acid from octanoyl-acyl-carrier-protein onto the lipoyl domains of lipoate-dependent enzymes. Lipoyl-ACP can also act as a substrate although octanoyl-ACP is likely to be the physiological substrate. The sequence is that of Octanoyltransferase from Shewanella frigidimarina (strain NCIMB 400).